We begin with the raw amino-acid sequence, 312 residues long: UDP-N-acetylenolpyruvoylglucosamine reductase (312 aa).

The FAD-binding PCMH-type domain maps to 30–202 (RVGGPAQWLA…VAAQFQLEPG (173 aa)). Residue Arg181 is part of the active site. Ser232 functions as the Proton donor in the catalytic mechanism. The active site involves Glu302.

The protein belongs to the MurB family. Requires FAD as cofactor.

The protein localises to the cytoplasm. The catalysed reaction is UDP-N-acetyl-alpha-D-muramate + NADP(+) = UDP-N-acetyl-3-O-(1-carboxyvinyl)-alpha-D-glucosamine + NADPH + H(+). Its pathway is cell wall biogenesis; peptidoglycan biosynthesis. Its function is as follows. Cell wall formation. The sequence is that of UDP-N-acetylenolpyruvoylglucosamine reductase from Synechococcus sp. (strain CC9311).